The sequence spans 413 residues: Mitochondrial inner membrane magnesium transporter MFM1 (413 aa).

Residues 1-35 constitute a mitochondrion transit peptide; sequence MRAFPRVLPFRHQRSYNNILLRTVRLFGSSLSSFD. N-linked (GlcNAc...) asparagine glycosylation occurs at N202. A helical transmembrane segment spans residues 329–349; that stretch reads LMLLGIRYAIGMLSLGGALFL. The short motif at 353-356 is the YGMN element; sequence YGMN. A helical transmembrane segment spans residues 367-387; sequence AYLTVTILGLISTVWLYAKGI.

It belongs to the CorA metal ion transporter (MIT) (TC 1.A.35) family. Forms homooligomers. Interacts with MRS2. In terms of processing, N-glycosylated. Glycosylation is important for correct localization of the protein.

The protein localises to the mitochondrion inner membrane. In terms of biological role, mitochondrial inner membrane magnesium transporter required for mitochondrial magnesium homeostasis. Modulates the conductance of the MRS2 channel. Involved in the splicing of mRNA group II introns in mitochondria by affecting mitochondrial magnesium concentrations, which are critical for group II intron splicing. This chain is Mitochondrial inner membrane magnesium transporter MFM1 (MFM1), found in Saccharomyces cerevisiae (strain ATCC 204508 / S288c) (Baker's yeast).